A 323-amino-acid chain; its full sequence is tRNA dimethylallyltransferase (323 aa).

12–19 serves as a coordination point for ATP; the sequence is GPTASGKT. 14–19 lines the substrate pocket; the sequence is TASGKT. Interaction with substrate tRNA stretches follow at residues 37–40 and 161–165; these read DSAL and QRLVR.

The protein belongs to the IPP transferase family. As to quaternary structure, monomer. It depends on Mg(2+) as a cofactor.

The catalysed reaction is adenosine(37) in tRNA + dimethylallyl diphosphate = N(6)-dimethylallyladenosine(37) in tRNA + diphosphate. Catalyzes the transfer of a dimethylallyl group onto the adenine at position 37 in tRNAs that read codons beginning with uridine, leading to the formation of N6-(dimethylallyl)adenosine (i(6)A). The sequence is that of tRNA dimethylallyltransferase from Stutzerimonas stutzeri (strain A1501) (Pseudomonas stutzeri).